Here is a 103-residue protein sequence, read N- to C-terminus: Vesicle-associated membrane protein 3 (103 aa).

The disordered stretch occupies residues M1 to Q25. Topologically, residues M1–K81 are cytoplasmic. A v-SNARE coiled-coil homology domain is found at R18–K78. Glycyl lysine isopeptide (Lys-Gly) (interchain with G-Cter in ubiquitin) cross-links involve residues K70, K72, and K81. Residues M82 to V102 form a helical; Anchor for type IV membrane protein membrane-spanning segment. Residue S103 is a topological domain, vesicular.

The protein belongs to the synaptobrevin family. In terms of assembly, interacts with POPDC1 (via the C-terminus cytoplasmic tail). Interacts with BCAP31; involved in VAMP3 export from the endoplasmic reticulum. Interacts with BAIAP3; this interaction is increased in the presence of calcium. Interacts with PICALM. In terms of processing, ubiquitinated by RNF167 at Lys-70, Lys-72 and Lys-81, regulating the recycling endosome pathway. Post-translationally, (Microbial infection) Targeted and hydrolyzed by C.botulinum neurotoxin type D (BoNT/D, botD) which hydrolyzes the 46-Lys-|-Leu-47 bond and probably inhibits neurotransmitter release. (Microbial infection) Targeted and hydrolyzed by C.botulinum neurotoxin type F (BoNT/F, botF) which hydrolyzes the 45-Gln-|-Lys-46 bond and probably inhibits neurotransmitter release. In terms of processing, (Microbial infection) Targeted and hydrolyzed by C.tetani toxin (tetX) which hydrolyzes the 63-Gln-|-Phe-64 bond and probably inhibits neurotransmitter release. In terms of tissue distribution, ubiquitous.

It localises to the early endosome membrane. The protein resides in the recycling endosome membrane. It is found in the synapse. The protein localises to the synaptosome. Functionally, SNARE involved in vesicular transport from the late endosomes to the trans-Golgi network. The polypeptide is Vesicle-associated membrane protein 3 (Vamp3) (Rattus norvegicus (Rat)).